The following is a 191-amino-acid chain: Dephospho-CoA kinase (191 aa).

The 189-residue stretch at 3-191 (AIGITGSYAS…KLIKDLECRV (189 aa)) folds into the DPCK domain. 11 to 16 (ASGKTF) contacts ATP.

Belongs to the CoaE family.

The protein resides in the cytoplasm. The enzyme catalyses 3'-dephospho-CoA + ATP = ADP + CoA + H(+). The protein operates within cofactor biosynthesis; coenzyme A biosynthesis; CoA from (R)-pantothenate: step 5/5. Its function is as follows. Catalyzes the phosphorylation of the 3'-hydroxyl group of dephosphocoenzyme A to form coenzyme A. The protein is Dephospho-CoA kinase of Rickettsia prowazekii (strain Madrid E).